The chain runs to 145 residues: D-aminoacyl-tRNA deacylase (145 aa).

The Gly-cisPro motif, important for rejection of L-amino acids signature appears at 137–138 (GP).

It belongs to the DTD family. As to quaternary structure, homodimer.

It is found in the cytoplasm. The enzyme catalyses glycyl-tRNA(Ala) + H2O = tRNA(Ala) + glycine + H(+). The catalysed reaction is a D-aminoacyl-tRNA + H2O = a tRNA + a D-alpha-amino acid + H(+). Functionally, an aminoacyl-tRNA editing enzyme that deacylates mischarged D-aminoacyl-tRNAs. Also deacylates mischarged glycyl-tRNA(Ala), protecting cells against glycine mischarging by AlaRS. Acts via tRNA-based rather than protein-based catalysis; rejects L-amino acids rather than detecting D-amino acids in the active site. By recycling D-aminoacyl-tRNA to D-amino acids and free tRNA molecules, this enzyme counteracts the toxicity associated with the formation of D-aminoacyl-tRNA entities in vivo and helps enforce protein L-homochirality. The chain is D-aminoacyl-tRNA deacylase from Yersinia pestis bv. Antiqua (strain Antiqua).